The primary structure comprises 1534 residues: Activating signal cointegrator 1 complex subunit 3 (1534 aa).

Residues 83 to 267 form the Helicase ATP-binding 1 domain; sequence ETAYNTNENL…FLHVNPFIGL (185 aa). 96-103 is an ATP binding site; the sequence is APTGAGKT. The DEVH box motif lies at 209 to 212; sequence DEVH. In terms of domain architecture, Helicase C-terminal 1 spans 294–500; the sequence is QLHDMEEVCY…SLADNLNAEI (207 aa). One can recognise an SEC63 1 domain in the interval 576 to 849; that stretch reads STDLGRTASH…GSEAVCIINF (274 aa). Residues 898-1073 form the Helicase ATP-binding 2 domain; sequence HTLYHTDTNV…WLGIGQVGLF (176 aa). 911–918 serves as a coordination point for ATP; it reads APTGSGKT. Residues 1015 to 1018 carry the DEIH box motif; the sequence is DEIH. The 208-residue stretch at 1106–1313 folds into the Helicase C-terminal 2 domain; it reads PVFQAIRTHS…GTVTSKQDAM (208 aa). An SEC63 2 domain is found at 1374–1481; the sequence is PLTYGRISSY…TLPHIQKQEL (108 aa).

It belongs to the helicase family.

The protein resides in the nucleus. Its subcellular location is the nucleus speckle. It is found in the cytoplasm. The protein localises to the cytosol. It carries out the reaction Couples ATP hydrolysis with the unwinding of duplex DNA by translocating in the 3'-5' direction.. The catalysed reaction is ATP + H2O = ADP + phosphate + H(+). Functionally, 3'-5' DNA helicase involved in repair of alkylated DNA. Promotes DNA unwinding to generate single-stranded substrate needed for alkbh3, enabling alkbh3 to process alkylated N3-methylcytosine (3mC) within double-stranded regions. Also involved in activation of the ribosome quality control (RQC) pathway, a pathway that degrades nascent peptide chains during problematic translation. Drives the splitting of stalled ribosomes. This chain is Activating signal cointegrator 1 complex subunit 3 (ascc3), found in Danio rerio (Zebrafish).